Here is a 147-residue protein sequence, read N- to C-terminus: Austinoid biosynthesis cluster protein H (147 aa).

The protein belongs to the trt14 isomerase family. As to quaternary structure, homodimer.

It participates in secondary metabolite biosynthesis; terpenoid biosynthesis. Its function is as follows. Part of the gene cluster that mediates the biosynthesis of calidodehydroaustin, a fungal meroterpenoid. The first step of the pathway is the synthesis of 3,5-dimethylorsellinic acid by the polyketide synthase ausA. 3,5-dimethylorsellinic acid is then prenylated by the polyprenyl transferase ausN. Further epoxidation by the FAD-dependent monooxygenase ausM and cyclization by the probable terpene cyclase ausL lead to the formation of protoaustinoid A. Protoaustinoid A is then oxidized to spiro-lactone preaustinoid A3 by the combined action of the FAD-binding monooxygenases ausB and ausC, and the dioxygenase ausE. Acid-catalyzed keto-rearrangement and ring contraction of the tetraketide portion of preaustinoid A3 by ausJ lead to the formation of preaustinoid A4. The aldo-keto reductase ausK, with the help of ausH, is involved in the next step by transforming preaustinoid A4 into isoaustinone which is in turn hydroxylated by the P450 monooxygenase ausI to form austinolide. The cytochrome P450 monooxygenase ausG modifies austinolide to austinol. Austinol is further acetylated to austin by the O-acetyltransferase ausP, which spontaneously changes to dehydroaustin. The cytochrome P450 monooxygenase ausR then converts dehydroaustin is into 7-dehydrodehydroaustin. The hydroxylation catalyzed by ausR permits the O-acetyltransferase ausQ to add an additional acetyl group to the molecule, leading to the formation of acetoxydehydroaustin. The short chain dehydrogenase ausT catalyzes the reduction of the double bond present between carbon atoms 1 and 2 to convert 7-dehydrodehydroaustin into 1,2-dihydro-7-hydroxydehydroaustin. AusQ catalyzes not only an acetylation reaction but also the addition of the PKS ausV diketide product to 1,2-dihydro-7-hydroxydehydroaustin, forming precalidodehydroaustin. Finally, the iron/alpha-ketoglutarate-dependent dioxygenase converts precalidodehydroaustin into calidodehydroaustin. In Aspergillus calidoustus, this protein is Austinoid biosynthesis cluster protein H.